A 337-amino-acid chain; its full sequence is Ornithine carbamoyltransferase, catabolic (337 aa).

Residues 57-60 (STRT), Q84, R108, and 135-138 (HPTQ) each bind carbamoyl phosphate. Residues N167, D231, and 235-236 (SM) each bind L-ornithine. Carbamoyl phosphate-binding positions include 272-273 (CL) and R317.

The protein belongs to the aspartate/ornithine carbamoyltransferase superfamily. OTCase family.

It is found in the cytoplasm. It catalyses the reaction carbamoyl phosphate + L-ornithine = L-citrulline + phosphate + H(+). Its pathway is amino-acid degradation; L-arginine degradation via ADI pathway; carbamoyl phosphate from L-arginine: step 2/2. Its function is as follows. Reversibly catalyzes the transfer of the carbamoyl group from carbamoyl phosphate (CP) to the N(epsilon) atom of ornithine (ORN) to produce L-citrulline. The protein is Ornithine carbamoyltransferase, catabolic (arcB) of Streptococcus pyogenes serotype M1.